Consider the following 370-residue polypeptide: DNA primase large subunit PriL (370 aa).

Cysteine 230, cysteine 301, cysteine 310, and cysteine 317 together coordinate [4Fe-4S] cluster. Residues 337–370 (EGEEAQGKEQGKEKDDGKEKENGKESEVKKKKEK) form a disordered region.

This sequence belongs to the eukaryotic-type primase large subunit family. Heterodimer of a small subunit (PriS) and a large subunit (PriL). [4Fe-4S] cluster is required as a cofactor.

In terms of biological role, regulatory subunit of DNA primase, an RNA polymerase that catalyzes the synthesis of short RNA molecules used as primers for DNA polymerase during DNA replication. Stabilizes and modulates the activity of the small subunit, increasing the rate of DNA synthesis, and conferring RNA synthesis capability. The DNA polymerase activity may enable DNA primase to also catalyze primer extension after primer synthesis. May also play a role in DNA repair. The polypeptide is DNA primase large subunit PriL (Methanosarcina mazei (strain ATCC BAA-159 / DSM 3647 / Goe1 / Go1 / JCM 11833 / OCM 88) (Methanosarcina frisia)).